The chain runs to 350 residues: MPVLHNRISNDELKARMLAESEPRTTISFYKYFTIVSPQQTRDALYQMFTALGIFGRVYLAHEGINAQISVPQSKVETFRQQLYAFDPALDGLRLNIALEDDGKSFWVLRMKVRDRIVADGIDDPSFDASNVGAYLKAAEVNAMLDDPDAIFIDMRNHYEYEVGHFENALEIPADTFREQLPKAVEMLREHADKKIVMYCTGGIRCEKASAWMKHNGFNKVWHIEGGIIEYARRAREQGLPVRFIGKNFVFDERMGERISDEVIAHCHQCGALCDSHTNCKNAGCHLLFIQCPLCASKFNGCCSEQCCEELALPEDEQRRRRAGREKGNKIFNKSRGRLNSKLGIPDPTE.

The Rhodanese domain maps to 146 to 240 (DDPDAIFIDM…YARRAREQGL (95 aa)). Cysteine 200 (cysteine persulfide intermediate) is an active-site residue. Residues 318 to 350 (QRRRRAGREKGNKIFNKSRGRLNSKLGIPDPTE) are disordered.

This sequence belongs to the TrhO family.

The enzyme catalyses uridine(34) in tRNA + AH2 + O2 = 5-hydroxyuridine(34) in tRNA + A + H2O. In terms of biological role, catalyzes oxygen-dependent 5-hydroxyuridine (ho5U) modification at position 34 in tRNAs. The protein is tRNA uridine(34) hydroxylase of Salmonella arizonae (strain ATCC BAA-731 / CDC346-86 / RSK2980).